The following is a 745-amino-acid chain: 5-methyltetrahydropteroyltriglutamate--homocysteine methyltransferase (745 aa).

5-methyltetrahydropteroyltri-L-glutamate-binding positions include 16–19 (REWK) and lysine 110. Residues 420–422 (IGS) and glutamate 473 each bind L-homocysteine. L-methionine-binding positions include 420–422 (IGS) and glutamate 473. Tryptophan 550 provides a ligand contact to 5-methyltetrahydropteroyltri-L-glutamate. Aspartate 588 serves as a coordination point for L-homocysteine. Aspartate 588 serves as a coordination point for L-methionine. Glutamate 594 contributes to the 5-methyltetrahydropteroyltri-L-glutamate binding site. Histidine 630, cysteine 632, and glutamate 654 together coordinate Zn(2+). Histidine 683 (proton donor) is an active-site residue. Cysteine 715 serves as a coordination point for Zn(2+).

It belongs to the vitamin-B12 independent methionine synthase family. It depends on Zn(2+) as a cofactor.

It catalyses the reaction 5-methyltetrahydropteroyltri-L-glutamate + L-homocysteine = tetrahydropteroyltri-L-glutamate + L-methionine. The protein operates within amino-acid biosynthesis; L-methionine biosynthesis via de novo pathway; L-methionine from L-homocysteine (MetE route): step 1/1. In terms of biological role, catalyzes the transfer of a methyl group from 5-methyltetrahydrofolate to homocysteine resulting in methionine formation. This is 5-methyltetrahydropteroyltriglutamate--homocysteine methyltransferase from Streptococcus agalactiae serotype III (strain NEM316).